A 589-amino-acid polypeptide reads, in one-letter code: O-fucosyltransferase 11 (589 aa).

The disordered stretch occupies residues 1 to 37 (MKSKIHHQPNGSNNGVVSSNDNGCRSESPSPPLSPNR). The segment covering 10 to 23 (NGSNNGVVSSNDNG) has biased composition (low complexity). Residues 68–88 (MIYASGLLMCVGPFSGLVGWV) traverse the membrane as a helical; Signal-anchor for type II membrane protein segment. Asn112, Asn136, and Asn239 each carry an N-linked (GlcNAc...) asparagine glycan. 332–334 (HLR) serves as a coordination point for substrate. N-linked (GlcNAc...) asparagine glycosylation is found at Asn405, Asn406, and Asn564.

Belongs to the glycosyltransferase GT106 family.

Its subcellular location is the membrane. It participates in glycan metabolism. The protein is O-fucosyltransferase 11 of Arabidopsis thaliana (Mouse-ear cress).